The primary structure comprises 155 residues: Small ribosomal subunit protein uS7cz/uS7cy (155 aa).

It belongs to the universal ribosomal protein uS7 family. As to quaternary structure, part of the 30S ribosomal subunit.

Its subcellular location is the plastid. It is found in the chloroplast. Its function is as follows. One of the primary rRNA binding proteins, it binds directly to 16S rRNA where it nucleates assembly of the head domain of the 30S subunit. In Morus indica (Mulberry), this protein is Small ribosomal subunit protein uS7cz/uS7cy (rps7-A).